Reading from the N-terminus, the 854-residue chain is Golgin subfamily A member 6-like protein 22 (854 aa).

6 disordered regions span residues 1-114, 320-348, 366-447, 481-568, 581-681, and 714-854; these read MLMW…HQEA, QEEK…MRRQ, MHEQ…MWRQ, QEEK…MWRQ, RQEE…EQEE, and QEEK…MQEH. Positions 15-35 are enriched in basic residues; that stretch reads LPTHPHLPTHPHLPTHPHLPT. Basic and acidic residues predominate over residues 45 to 66; it reads MSKETRQSKLAEAKEQLTDHHP. Polar residues-rich tracts occupy residues 67–77 and 85–97; these read QTNPSVGTAAS and NNGT…TSGG. The segment covering 100 to 114 has biased composition (basic and acidic residues); it reads SPEDEQKASHQHQEA. Residues 103–854 are a coiled coil; it reads DEQKASHQHQ…RQQEEKMQEH (752 aa).

The protein belongs to the GOLGA6 family.

This is Golgin subfamily A member 6-like protein 22 from Homo sapiens (Human).